The chain runs to 549 residues: Chaperonin GroEL (549 aa).

ATP is bound by residues 30–33 (TLGP), Lys51, 87–91 (DGTTT), Gly415, 479–481 (NAA), and Asp495.

Belongs to the chaperonin (HSP60) family. As to quaternary structure, forms a cylinder of 14 subunits composed of two heptameric rings stacked back-to-back. Interacts with the co-chaperonin GroES.

It localises to the cytoplasm. It carries out the reaction ATP + H2O + a folded polypeptide = ADP + phosphate + an unfolded polypeptide.. Functionally, together with its co-chaperonin GroES, plays an essential role in assisting protein folding. The GroEL-GroES system forms a nano-cage that allows encapsulation of the non-native substrate proteins and provides a physical environment optimized to promote and accelerate protein folding. The protein is Chaperonin GroEL of Stenotrophomonas maltophilia (strain R551-3).